A 184-amino-acid chain; its full sequence is PLASMODESMATA CALLOSE-BINDING PROTEIN 3 (184 aa).

The signal sequence occupies residues 1-19 (MAVFVLVMILLAMAGHSSG). Residues Cys22 and Cys84 are joined by a disulfide bond. The interval 109–146 (SGSGTTTPVTTTPSTRVPTTTNTRPYTITPSTGGGLGI) is disordered. Low complexity predominate over residues 113 to 139 (TTTPVTTTPSTRVPTTTNTRPYTITPS). Residue Ser158 is the site of GPI-anchor amidated serine attachment. Residues 159-184 (FGFKLQSPRFGFIVLFTLFLPFYLFS) constitute a propeptide, removed in mature form.

In terms of processing, contains two additional disulfide bonds. As to expression, expressed in the shoot apical region and in young leaves but also detected in the laminar and vasculature of mature leaves.

It localises to the cell membrane. It is found in the cell junction. Its subcellular location is the plasmodesma. The sequence is that of PLASMODESMATA CALLOSE-BINDING PROTEIN 3 (PDCB3) from Arabidopsis thaliana (Mouse-ear cress).